We begin with the raw amino-acid sequence, 152 residues long: MTASNTKNASAIPIDKFSNVRITSIWTFLQSVDWSEPWLMALLAFHVFCFAFTLLSCKYYRIQICHFLLMVAMVYSAEYLNELAAMNWRSFSKFQYFDSKGMFISLVYSVPLLLNTVIIVAVWVWRTFSTMTELKILQLKRKAARENHKKTQ.

Residues 1–36 (MTASNTKNASAIPIDKFSNVRITSIWTFLQSVDWSE) are Perinuclear space-facing. Residues 37–57 (PWLMALLAFHVFCFAFTLLSC) form a helical membrane-spanning segment. Over 58–63 (KYYRIQ) the chain is Nuclear. A helical transmembrane segment spans residues 64 to 84 (ICHFLLMVAMVYSAEYLNELA). Residues 85–102 (AMNWRSFSKFQYFDSKGM) are Perinuclear space-facing. The chain crosses the membrane as a helical span at residues 103 to 123 (FISLVYSVPLLLNTVIIVAVW). At 124-152 (VWRTFSTMTELKILQLKRKAARENHKKTQ) the chain is on the nuclear side. A DNA-binding region spans residues 124–152 (VWRTFSTMTELKILQLKRKAARENHKKTQ). Residues 129-152 (STMTELKILQLKRKAARENHKKTQ) adopt a coiled-coil conformation.

Belongs to the TMEM18 family.

Its subcellular location is the nucleus membrane. This is Transmembrane protein 18 (tmem18) from Danio rerio (Zebrafish).